A 139-amino-acid polypeptide reads, in one-letter code: uncharacterized protein (139 aa).

This is an uncharacterized protein from Burkholderia cepacia (Pseudomonas cepacia).